A 3390-amino-acid polypeptide reads, in one-letter code: Genome polyprotein (3390 aa).

The interval 1-15 (MNNQRKKTGKPSINM) is interaction with host EXOC1. The Cytoplasmic segment spans residues 1–100 (MNNQRKKTGK…MLSIINKRKK (100 aa)). The hydrophobic; homodimerization of capsid protein C stretch occupies residues 37–72 (LLNGQGPMKLVMAFIAFLRFLAIPPTAGVLARWGTF). The propeptide at 101–114 (TSLCLMMIMPAALA) is ER anchor for the capsid protein C, removed in mature form by serine protease NS3. Residues 101-120 (TSLCLMMIMPAALAFHLTSR) traverse the membrane as a helical segment. The Extracellular portion of the chain corresponds to 121–243 (DGEPRMIVGK…VEKVETWALR (123 aa)). Asparagine 183 carries N-linked (GlcNAc...) asparagine; by host glycosylation. Residues 244 to 264 (HPGFTILALFLAHYIGTSLTQ) form a helical membrane-spanning segment. Lysine 265 is a topological domain (cytoplasmic). A helical membrane pass occupies residues 266 to 280 (VVIFILLMLVTPSMT). The Extracellular portion of the chain corresponds to 281 to 723 (MRCVGVGNRD…VHQIFGSAYT (443 aa)). 4 cysteine pairs are disulfide-bonded: cysteine 283–cysteine 310, cysteine 340–cysteine 401, cysteine 354–cysteine 385, and cysteine 372–cysteine 396. A glycan (N-linked (GlcNAc...) asparagine; by host) is linked at asparagine 347. Positions 378–391 (DRGWGNGCGLFGKG) are fusion peptide. The N-linked (GlcNAc...) asparagine; by host glycan is linked to asparagine 433. Cystine bridges form between cysteine 463/cysteine 563 and cysteine 580/cysteine 611. A helical membrane pass occupies residues 724 to 744 (ALFSGVSWVMKIGIGVLLTWI). The Cytoplasmic portion of the chain corresponds to 745-750 (GLNSKN). A helical membrane pass occupies residues 751–771 (TSMSFSCIAIGIITLYLGAVV). The Extracellular portion of the chain corresponds to 772–1193 (QADMGCVINW…MIGSNASDRM (422 aa)). 6 disulfides stabilise this stretch: cysteine 777/cysteine 788, cysteine 828/cysteine 916, cysteine 952/cysteine 996, cysteine 1053/cysteine 1102, cysteine 1064/cysteine 1086, and cysteine 1085/cysteine 1089. N-linked (GlcNAc...) asparagine; by host glycans are attached at residues asparagine 903 and asparagine 980. N-linked (GlcNAc...) asparagine; by host glycosylation is found at asparagine 1132 and asparagine 1188. A helical membrane pass occupies residues 1194–1218 (GMGVTYLALIATFKIQPFLALGFFL). The Cytoplasmic portion of the chain corresponds to 1219 to 1224 (RKLTSR). A helical transmembrane segment spans residues 1225–1243 (ENLLLGVGLAMATTLQLPE). The Lumenal portion of the chain corresponds to 1244 to 1267 (DIEQMANGIALGLMALKLITQFET). A helical membrane pass occupies residues 1268 to 1288 (YQLWTALISLTCSNTMFTLTV). Position 1289 (alanine 1289) is a topological domain, cytoplasmic. Residues 1290 to 1308 (WRTATLILAGVSLLPVCQS) form a helical membrane-spanning segment. Over 1309–1315 (SSMRKTD) the chain is Lumenal. A helical transmembrane segment spans residues 1316-1336 (WLPMAVAAMGVPPLPLFIFSL). Residues 1337–1344 (KDTLKRRS) lie on the Cytoplasmic side of the membrane. A helical transmembrane segment spans residues 1345–1365 (WPLNEGVMAVGLVSILASSLL). Over 1366 to 1368 (RND) the chain is Lumenal. The chain crosses the membrane as a helical span at residues 1369–1389 (VPMAGPLVAGGLLIACYVITG). The Cytoplasmic segment spans residues 1390–1443 (TSADLTVEKAADITWEEEAEQTGVSHNLMITVDDDGTMRIKDDETENILTVLLK). The segment at 1396-1435 (VEKAADITWEEEAEQTGVSHNLMITVDDDGTMRIKDDETE) is interacts with and activates NS3 protease. Residues 1444-1464 (TALLIVSGVFPYSIPATLLVW) constitute an intramembrane region (helical). Residues 1465-2146 (HTWQKQTQRS…VEELPETMET (682 aa)) lie on the Cytoplasmic side of the membrane. The region spanning 1474–1651 (SGVLWDVPSP…NAEPDGPTPE (178 aa)) is the Peptidase S7 domain. Active-site charge relay system; for serine protease NS3 activity residues include histidine 1524, aspartate 1548, and serine 1608. In terms of domain architecture, Helicase ATP-binding spans 1654-1810 (EEMFKKRNLT…QSNAPIQDEE (157 aa)). The interval 1658–1661 (KKRN) is important for RNA-binding. Residue 1667-1674 (LHPGSGKT) coordinates ATP. Positions 1758–1761 (DEAH) match the DEAH box motif. The 167-residue stretch at 1820–1986 (SGNEWITDFA…GIIPALFEPE (167 aa)) folds into the Helicase C-terminal domain. Lysine 1862 is subject to N6-acetyllysine; by host. The chain crosses the membrane as a helical span at residues 2147–2167 (LLLLGLMILLTGGAMLFLISG). Over 2168–2169 (KG) the chain is Lumenal. Positions 2170–2190 (IGKTSIGLICVIASSGMLWMA) form an intramembrane region, helical. A topological domain (lumenal) is located at residue glutamate 2191. A helical transmembrane segment spans residues 2192–2212 (IPLQWIASAIVLEFFMMVLLI). The Cytoplasmic segment spans residues 2213 to 2227 (PEPEKQRTPQDNQLA). A helical membrane pass occupies residues 2228-2248 (YVVIGILTLAAIIAANEMGLL). The Lumenal segment spans residues 2249 to 2273 (ETTKRDLGMSKEPGVVSPTSYLDVD). An intramembrane region (helical) is located at residues 2274–2294 (LHPASAWTLYAVATTVITPML). Topologically, residues 2295–2305 (RHTIENSTANV) are lumenal. N-linked (GlcNAc...) asparagine; by host glycans are attached at residues asparagine 2300 and asparagine 2304. The segment at residues 2306 to 2326 (SLAAIANQAVVLMGLDKGWPI) is an intramembrane region (helical). The Lumenal segment spans residues 2327 to 2346 (SKMDLGVPLLALGCYSQVNP). A helical membrane pass occupies residues 2347–2367 (LTLTAAVLLLITHYAIIGPGL). Residues 2368 to 2412 (QAKATREAQKRTAAGIMKNPTVDGIMTIDLDPVIYDSKFEKQLGQ) lie on the Cytoplasmic side of the membrane. Residues 2413-2433 (VMLLVLCAVQLLLMRTSWALC) traverse the membrane as a helical segment. The Lumenal portion of the chain corresponds to 2434–2458 (EALTLATGPITTLWEGSPGKFWNTT). Asparagine 2456 carries an N-linked (GlcNAc...) asparagine; by host glycan. A helical transmembrane segment spans residues 2459 to 2479 (IAVSMANIFRGSYLAGAGLAF). Residues 2480–3390 (SIMKSVGTGK…KEEESEGAIW (911 aa)) are Cytoplasmic-facing. The mRNA cap 0-1 NS5-type MT domain maps to 2492–2753 (TGSQGETLGE…DVDLGAGTRH (262 aa)). Residue serine 2546 coordinates S-adenosyl-L-methionine. A Phosphoserine modification is found at serine 2546. Lysine 2551 functions as the For 2'-O-MTase activity in the catalytic mechanism. The short motif at 2567–2570 (VIDL) is the SUMO-interacting motif element. S-adenosyl-L-methionine is bound by residues glycine 2576, tryptophan 2577, threonine 2594, lysine 2595, aspartate 2621, and valine 2622. The active-site For 2'-O-MTase activity is aspartate 2636. An S-adenosyl-L-methionine-binding site is contributed by isoleucine 2637. Residues lysine 2670 and glutamate 2706 each act as for 2'-O-MTase activity in the active site. An S-adenosyl-L-methionine-binding site is contributed by tyrosine 2708. Zn(2+) contacts are provided by glutamate 2927, histidine 2931, cysteine 2936, and cysteine 2939. The RdRp catalytic domain maps to 3018–3168 (AMYADDTAGW…PIDDRFANAL (151 aa)). Residues histidine 3202, cysteine 3218, and cysteine 3337 each coordinate Zn(2+).

It in the N-terminal section; belongs to the class I-like SAM-binding methyltransferase superfamily. mRNA cap 0-1 NS5-type methyltransferase family. In terms of assembly, homodimer. Interacts (via N-terminus) with host EXOC1 (via C-terminus); this interaction results in EXOC1 degradation through the proteasome degradation pathway. Forms heterodimers with envelope protein E in the endoplasmic reticulum and Golgi. As to quaternary structure, homodimer; in the endoplasmic reticulum and Golgi. Interacts with protein prM. Interacts with non-structural protein 1. In terms of assembly, homodimer; Homohexamer when secreted. Interacts with envelope protein E. Interacts (via N-terminus) with serine protease NS3. As to quaternary structure, forms a heterodimer with serine protease NS3. May form homooligomers. In terms of assembly, forms a heterodimer with NS2B. Interacts with NS4B. Interacts with unphosphorylated RNA-directed RNA polymerase NS5; this interaction stimulates RNA-directed RNA polymerase NS5 guanylyltransferase activity. Interacts with host MAVS; this interaction inhibits the synthesis of IFN-beta. Interacts with host AUP1; the interaction occurs in the presence of Dengue virus NS4B and induces lipophagy which facilitates production of virus progeny particles. As to quaternary structure, interacts with serine protease NS3. In terms of assembly, homodimer. Interacts with host STAT2; this interaction inhibits the phosphorylation of the latter, and, when all viral proteins are present (polyprotein), targets STAT2 for degradation. Interacts with serine protease NS3. Post-translationally, specific enzymatic cleavages in vivo yield mature proteins. Cleavages in the lumen of endoplasmic reticulum are performed by host signal peptidase, whereas cleavages in the cytoplasmic side are performed by serine protease NS3. Signal cleavage at the 2K-4B site requires a prior NS3 protease-mediated cleavage at the 4A-2K site. In terms of processing, cleaved in post-Golgi vesicles by a host furin, releasing the mature small envelope protein M, and peptide pr. This cleavage is incomplete as up to 30% of viral particles still carry uncleaved prM. N-glycosylated. Post-translationally, N-glycosylated. The excreted form is glycosylated and this is required for efficient secretion of the protein from infected cells. In terms of processing, acetylated by host KAT5. Acetylation modulates NS3 RNA-binding and unwinding activities and plays an important positive role for viral replication. Sumoylation of RNA-directed RNA polymerase NS5 increases NS5 protein stability allowing proper viral RNA replication. Post-translationally, phosphorylated on serines residues. This phosphorylation may trigger NS5 nuclear localization.

Its subcellular location is the virion. It is found in the host nucleus. It localises to the host cytoplasm. The protein localises to the host perinuclear region. The protein resides in the secreted. Its subcellular location is the virion membrane. It is found in the host endoplasmic reticulum membrane. It localises to the host mitochondrion. The catalysed reaction is Selective hydrolysis of -Xaa-Xaa-|-Yaa- bonds in which each of the Xaa can be either Arg or Lys and Yaa can be either Ser or Ala.. The enzyme catalyses RNA(n) + a ribonucleoside 5'-triphosphate = RNA(n+1) + diphosphate. It carries out the reaction a ribonucleoside 5'-triphosphate + H2O = a ribonucleoside 5'-diphosphate + phosphate + H(+). It catalyses the reaction ATP + H2O = ADP + phosphate + H(+). The catalysed reaction is a 5'-end (5'-triphosphoguanosine)-ribonucleoside in mRNA + S-adenosyl-L-methionine = a 5'-end (N(7)-methyl 5'-triphosphoguanosine)-ribonucleoside in mRNA + S-adenosyl-L-homocysteine. The enzyme catalyses a 5'-end (N(7)-methyl 5'-triphosphoguanosine)-ribonucleoside in mRNA + S-adenosyl-L-methionine = a 5'-end (N(7)-methyl 5'-triphosphoguanosine)-(2'-O-methyl-ribonucleoside) in mRNA + S-adenosyl-L-homocysteine + H(+). Its function is as follows. Plays a role in virus budding by binding to the cell membrane and gathering the viral RNA into a nucleocapsid that forms the core of a mature virus particle. During virus entry, may induce genome penetration into the host cytoplasm after hemifusion induced by the surface proteins. Can migrate to the cell nucleus where it modulates host functions. Overcomes the anti-viral effects of host EXOC1 by sequestering and degrading the latter through the proteasome degradation pathway. In terms of biological role, inhibits RNA silencing by interfering with host Dicer. Prevents premature fusion activity of envelope proteins in trans-Golgi by binding to envelope protein E at pH6.0. After virion release in extracellular space, gets dissociated from E dimers. Functionally, acts as a chaperone for envelope protein E during intracellular virion assembly by masking and inactivating envelope protein E fusion peptide. prM is the only viral peptide matured by host furin in the trans-Golgi network probably to avoid catastrophic activation of the viral fusion activity in acidic Golgi compartment prior to virion release. prM-E cleavage is inefficient, and many virions are only partially matured. These uncleaved prM would play a role in immune evasion. Its function is as follows. May play a role in virus budding. Exerts cytotoxic effects by activating a mitochondrial apoptotic pathway through M ectodomain. May display a viroporin activity. In terms of biological role, binds to host cell surface receptor and mediates fusion between viral and cellular membranes. Envelope protein is synthesized in the endoplasmic reticulum in the form of heterodimer with protein prM. They play a role in virion budding in the ER, and the newly formed immature particle is covered with 60 spikes composed of heterodimer between precursor prM and envelope protein E. The virion is transported to the Golgi apparatus where the low pH causes dissociation of PrM-E heterodimers and formation of E homodimers. prM-E cleavage is inefficient, and many virions are only partially matured. These uncleaved prM would play a role in immune evasion. Involved in immune evasion, pathogenesis and viral replication. Once cleaved off the polyprotein, is targeted to three destinations: the viral replication cycle, the plasma membrane and the extracellular compartment. Essential for viral replication. Required for formation of the replication complex and recruitment of other non-structural proteins to the ER-derived membrane structures. Excreted as a hexameric lipoparticle that plays a role against host immune response. Antagonizing the complement function. Binds to the host macrophages and dendritic cells. Inhibits signal transduction originating from Toll-like receptor 3 (TLR3). Functionally, disrupts the host endothelial glycocalyx layer of host pulmonary microvascular endothelial cells, inducing degradation of sialic acid and shedding of heparan sulfate proteoglycans. NS1 induces expression of sialidases, heparanase, and activates cathepsin L, which activates heparanase via enzymatic cleavage. These effects are probably linked to the endothelial hyperpermeability observed in severe dengue disease. Its function is as follows. Component of the viral RNA replication complex that functions in virion assembly and antagonizes the host immune response. In terms of biological role, required cofactor for the serine protease function of NS3. May have membrane-destabilizing activity and form viroporins. Displays three enzymatic activities: serine protease, NTPase and RNA helicase. NS3 serine protease, in association with NS2B, performs its autocleavage and cleaves the polyprotein at dibasic sites in the cytoplasm: C-prM, NS2A-NS2B, NS2B-NS3, NS3-NS4A, NS4A-2K and NS4B-NS5. NS3 RNA helicase binds RNA and unwinds dsRNA in the 3' to 5' direction. Functionally, regulates the ATPase activity of the NS3 helicase activity. NS4A allows NS3 helicase to conserve energy during unwinding. Plays a role in the inhibition of the host innate immune response. Interacts with host MAVS and thereby prevents the interaction between RIGI and MAVS. In turn, IFN-beta production is impaired. Interacts with host AUP1 which mediates induction of lipophagy in host cells and facilitates production of virus progeny particles. Its function is as follows. Functions as a signal peptide for NS4B and is required for the interferon antagonism activity of the latter. In terms of biological role, induces the formation of ER-derived membrane vesicles where the viral replication takes place. Inhibits interferon (IFN)-induced host STAT1 phosphorylation and nuclear translocation, thereby preventing the establishment of cellular antiviral state by blocking the IFN-alpha/beta pathway. Replicates the viral (+) and (-) RNA genome, and performs the capping of genomes in the cytoplasm. NS5 methylates viral RNA cap at guanine N-7 and ribose 2'-O positions. Besides its role in RNA genome replication, also prevents the establishment of cellular antiviral state by blocking the interferon-alpha/beta (IFN-alpha/beta) signaling pathway. Inhibits host TYK2 and STAT2 phosphorylation, thereby preventing activation of JAK-STAT signaling pathway. This is Genome polyprotein (pol) from Dengue virus type 3 (strain Martinique/1243/1999) (DENV-3).